The primary structure comprises 274 residues: MLSVATRSGPFAPVLSATSRGVAGALRPLVQATVPATPEQPVLNLKRPFLSRESLSGQAVRRPLVASVGLNVPASVCYSHTDVRVPDFSEYRRLEVLDSTKSSRESSEARKGFSYLVTGVTTVGVAYAAKNVVTQFVSSMSASADVLALAKIEIKLSDIPEGKNMTFKWRGKPLFVRHRTQKEIEQEAAVELSQLRDPQHDLDRVKKPEWVILIGVCTHLGCVPIANAGDFGGYYCPCHGSHYDASGRIRLGPAPLNLEVPIYEFTSDDMVIVG.

At 79–103 (SHTDVRVPDFSEYRRLEVLDSTKSS) the chain is on the mitochondrial matrix side. A helical transmembrane segment spans residues 104–140 (RESSEARKGFSYLVTGVTTVGVAYAAKNVVTQFVSSM). The Mitochondrial intermembrane portion of the chain corresponds to 141 to 274 (SASADVLALA…FTSDDMVIVG (134 aa)). The region spanning 187–272 (EAAVELSQLR…YEFTSDDMVI (86 aa)) is the Rieske domain. [2Fe-2S] cluster-binding residues include C217, H219, C236, H239, and S241. C222 and C238 form a disulfide bridge.

It belongs to the Rieske iron-sulfur protein family. As to quaternary structure, component of the ubiquinol-cytochrome c oxidoreductase (cytochrome b-c1 complex, complex III, CIII), a multisubunit enzyme composed of 11 subunits. The complex is composed of 3 respiratory subunits cytochrome b, cytochrome c1 and Rieske protein UQCRFS1, 2 core protein subunits UQCRC1/QCR1 and UQCRC2/QCR2, and 6 low-molecular weight protein subunits UQCRH/QCR6, UQCRB/QCR7, UQCRQ/QCR8, UQCR10/QCR9, UQCR11/QCR10 and subunit 9, the cleavage product of Rieske protein UQCRFS1. The complex exists as an obligatory dimer and forms supercomplexes (SCs) in the inner mitochondrial membrane with NADH-ubiquinone oxidoreductase (complex I, CI) and cytochrome c oxidase (complex IV, CIV), resulting in different assemblies (supercomplex SCI(1)III(2)IV(1) and megacomplex MCI(2)III(2)IV(2)). Incorporation of the Rieske protein UQCRFS1 is the penultimate step in complex III assembly. Interacts with TTC19, which is involved in the clearance of UQCRFS1 fragments. In terms of assembly, component of the ubiquinol-cytochrome c oxidoreductase (cytochrome b-c1 complex, complex III, CIII). Subunit 9 corresponds to the mitochondrial targeting sequence (MTS) of Rieske protein UQCRFS1. It is retained after processing and incorporated inside complex III, where it remains bound to the complex and localizes between the 2 core subunits UQCRC1/QCR1 and UQCRC2/QCR2. Requires [2Fe-2S] cluster as cofactor. Post-translationally, proteolytic processing is necessary for the correct insertion of UQCRFS1 in the complex III dimer. Several fragments are generated during UQCRFS1 insertion, most probably due to the endogenous matrix-processing peptidase (MPP) activity of the 2 core protein subunits UQCRC1/QCR1 and UQCRC2/QCR2, which are homologous to the 2 mitochondrial-processing peptidase (MPP) subunits beta-MPP and alpha-MPP respectively. The action of the protease is also necessary for the clearance of the UQCRFS1 fragments.

The protein resides in the mitochondrion inner membrane. The catalysed reaction is a quinol + 2 Fe(III)-[cytochrome c](out) = a quinone + 2 Fe(II)-[cytochrome c](out) + 2 H(+)(out). Functionally, component of the ubiquinol-cytochrome c oxidoreductase, a multisubunit transmembrane complex that is part of the mitochondrial electron transport chain which drives oxidative phosphorylation. The respiratory chain contains 3 multisubunit complexes succinate dehydrogenase (complex II, CII), ubiquinol-cytochrome c oxidoreductase (cytochrome b-c1 complex, complex III, CIII) and cytochrome c oxidase (complex IV, CIV), that cooperate to transfer electrons derived from NADH and succinate to molecular oxygen, creating an electrochemical gradient over the inner membrane that drives transmembrane transport and the ATP synthase. The cytochrome b-c1 complex catalyzes electron transfer from ubiquinol to cytochrome c, linking this redox reaction to translocation of protons across the mitochondrial inner membrane, with protons being carried across the membrane as hydrogens on the quinol. In the process called Q cycle, 2 protons are consumed from the matrix, 4 protons are released into the intermembrane space and 2 electrons are passed to cytochrome c. The Rieske protein is a catalytic core subunit containing a [2Fe-2S] iron-sulfur cluster. It cycles between 2 conformational states during catalysis to transfer electrons from the quinol bound in the Q(0) site in cytochrome b to cytochrome c1. Incorporation of UQCRFS1 is the penultimate step in complex III assembly. Its function is as follows. Component of the ubiquinol-cytochrome c oxidoreductase (cytochrome b-c1 complex, complex III, CIII). UQCRFS1 undergoes proteolytic processing once it is incorporated in the complex III dimer. One of the fragments, called subunit 9, corresponds to its mitochondrial targeting sequence (MTS). The proteolytic processing is necessary for the correct insertion of UQCRFS1 in the complex III dimer, but the persistence of UQCRFS1-derived fragments may prevent newly imported UQCRFS1 to be processed and assembled into complex III and is detrimental for the complex III structure and function. The sequence is that of Cytochrome b-c1 complex subunit Rieske, mitochondrial (UQCRFS1) from Pongo pygmaeus (Bornean orangutan).